The primary structure comprises 555 residues: Small ribosomal subunit protein uS3m (555 aa).

The interval Met-1–Ser-20 is disordered.

Belongs to the universal ribosomal protein uS3 family.

It is found in the mitochondrion. This is Small ribosomal subunit protein uS3m (RPS3) from Brassica napus (Rape).